We begin with the raw amino-acid sequence, 306 residues long: Tryptophan 2,3-dioxygenase (306 aa).

Residues Met1–Ala33 are disordered. Residues Phe75 to His79, Tyr137, and Arg141 each bind substrate. His264 serves as a coordination point for heme. Position 278 (Thr278) interacts with substrate.

It belongs to the tryptophan 2,3-dioxygenase family. In terms of assembly, homotetramer. Requires heme as cofactor.

It carries out the reaction L-tryptophan + O2 = N-formyl-L-kynurenine. Its pathway is amino-acid degradation; L-tryptophan degradation via kynurenine pathway; L-kynurenine from L-tryptophan: step 1/2. Its function is as follows. Heme-dependent dioxygenase that catalyzes the oxidative cleavage of the L-tryptophan (L-Trp) pyrrole ring and converts L-tryptophan to N-formyl-L-kynurenine. Catalyzes the oxidative cleavage of the indole moiety. This chain is Tryptophan 2,3-dioxygenase, found in Burkholderia pseudomallei (strain 668).